The sequence spans 452 residues: Pup--protein ligase (452 aa).

Mg(2+) is bound at residue glutamate 9. ATP is bound at residue arginine 53. Tyrosine 55 provides a ligand contact to Mg(2+). Aspartate 57 (proton acceptor) is an active-site residue. Glutamate 63 contributes to the Mg(2+) binding site. ATP-binding residues include threonine 66 and tryptophan 419.

This sequence belongs to the Pup ligase/Pup deamidase family. Pup-conjugating enzyme subfamily.

It carries out the reaction ATP + [prokaryotic ubiquitin-like protein]-L-glutamate + [protein]-L-lysine = ADP + phosphate + N(6)-([prokaryotic ubiquitin-like protein]-gamma-L-glutamyl)-[protein]-L-lysine.. It functions in the pathway protein degradation; proteasomal Pup-dependent pathway. It participates in protein modification; protein pupylation. Its function is as follows. Catalyzes the covalent attachment of the prokaryotic ubiquitin-like protein modifier Pup to the proteasomal substrate proteins, thereby targeting them for proteasomal degradation. This tagging system is termed pupylation. The ligation reaction involves the side-chain carboxylate of the C-terminal glutamate of Pup and the side-chain amino group of a substrate lysine. The chain is Pup--protein ligase from Salinispora tropica (strain ATCC BAA-916 / DSM 44818 / JCM 13857 / NBRC 105044 / CNB-440).